A 356-amino-acid chain; its full sequence is 3-dehydroquinate synthase (356 aa).

Residues 106–110, 130–131, Lys143, and Lys152 each bind NAD(+); these read GVVGD and TT. Zn(2+) is bound by residues Glu185, His248, and His265.

It belongs to the sugar phosphate cyclases superfamily. Dehydroquinate synthase family. NAD(+) serves as cofactor. It depends on Co(2+) as a cofactor. Zn(2+) is required as a cofactor.

Its subcellular location is the cytoplasm. It catalyses the reaction 7-phospho-2-dehydro-3-deoxy-D-arabino-heptonate = 3-dehydroquinate + phosphate. The protein operates within metabolic intermediate biosynthesis; chorismate biosynthesis; chorismate from D-erythrose 4-phosphate and phosphoenolpyruvate: step 2/7. Catalyzes the conversion of 3-deoxy-D-arabino-heptulosonate 7-phosphate (DAHP) to dehydroquinate (DHQ). In Caldanaerobacter subterraneus subsp. tengcongensis (strain DSM 15242 / JCM 11007 / NBRC 100824 / MB4) (Thermoanaerobacter tengcongensis), this protein is 3-dehydroquinate synthase.